A 442-amino-acid polypeptide reads, in one-letter code: Elongation factor 1-gamma (442 aa).

Residues 2 to 87 (AAGTLYTYPE…YLSNDVLRGS (86 aa)) enclose the GST N-terminal domain. A GST C-terminal domain is found at 88–216 (TPQASAQVLQ…VKLCEKMAQF (129 aa)). Basic and acidic residues-rich tracts occupy residues 227 to 242 (KKEA…KEGG) and 249 to 263 (QEKK…KAAP). Residues 227–273 (KKEAPIKKEKGGKEGGKQQPQQQEKKEKKKEEKKAAPAEEEMDECEA) are disordered. The region spanning 281–442 (AKDPFAHLPK…KPFNQGKIFK (162 aa)) is the EF-1-gamma C-terminal domain.

In terms of assembly, EF-1 is composed of four subunits: alpha, beta, delta, and gamma.

Its function is as follows. Probably plays a role in anchoring the complex to other cellular components. This Danio rerio (Zebrafish) protein is Elongation factor 1-gamma (eef1g).